The following is a 125-amino-acid chain: Large ribosomal subunit protein bL12 (125 aa).

It belongs to the bacterial ribosomal protein bL12 family. In terms of assembly, homodimer. Part of the ribosomal stalk of the 50S ribosomal subunit. Forms a multimeric L10(L12)X complex, where L10 forms an elongated spine to which 2 to 4 L12 dimers bind in a sequential fashion. Binds GTP-bound translation factors.

Forms part of the ribosomal stalk which helps the ribosome interact with GTP-bound translation factors. Is thus essential for accurate translation. The chain is Large ribosomal subunit protein bL12 from Rhizobium johnstonii (strain DSM 114642 / LMG 32736 / 3841) (Rhizobium leguminosarum bv. viciae).